The chain runs to 228 residues: MPKLILCRHGQSVWNAENLFTGWADVDLSEQGENEAITSGKKLKAQGIEIDIVYTSLLERAIKTTYHLLNESNQLFIPIIKSWRLNERHYGGLQGLNKDDARKKFGEDQVHIWRRSYDVAPPKQDEAQRESYLNDRKYEHLDRRVMPESESLKDTLVRVIPYWNDQISQQLLDGKTVLVSAHGNSLRALIKYLENVSDEDIVGYEIKTGAPLIYELTDDLQVIDKYYL.

Residues 8 to 15, 21 to 22, Arg-60, 87 to 90, Lys-98, 114 to 115, and 183 to 184 contribute to the substrate site; these read RHGQSVWN, TG, ERHY, RR, and GN. His-9 functions as the Tele-phosphohistidine intermediate in the catalytic mechanism. Glu-87 (proton donor/acceptor) is an active-site residue.

Belongs to the phosphoglycerate mutase family. BPG-dependent PGAM subfamily.

The catalysed reaction is (2R)-2-phosphoglycerate = (2R)-3-phosphoglycerate. It participates in carbohydrate degradation; glycolysis; pyruvate from D-glyceraldehyde 3-phosphate: step 3/5. Its function is as follows. Catalyzes the interconversion of 2-phosphoglycerate and 3-phosphoglycerate. The protein is 2,3-bisphosphoglycerate-dependent phosphoglycerate mutase of Staphylococcus saprophyticus subsp. saprophyticus (strain ATCC 15305 / DSM 20229 / NCIMB 8711 / NCTC 7292 / S-41).